The primary structure comprises 567 residues: Geranylgeranyl transferase type-2 subunit alpha (567 aa).

6 PFTA repeats span residues 44–78 (LDES…QLET), 88–122 (LVKA…RLPE), 124–158 (NWAR…QAAV), 159–193 (APAE…QLHP), 207–241 (VLLR…RAEP), and 363–397 (VLQS…ALDP). Ser-98 carries the post-translational modification Phosphoserine. LRR repeat units follow at residues 442-463 (DVRV…EQLL), 464-486 (LVTH…AALR), 487-508 (CLEV…ANLP), 509-530 (RLRE…QTLA), and 534-555 (RLVF…RERL).

This sequence belongs to the protein prenyltransferase subunit alpha family. As to quaternary structure, heterotrimer composed of RABGGTA, RABGGTB and CHM; within this trimer, RABGGTA and RABGGTB form the catalytic component B, while CHM (component A) mediates peptide substrate binding. The Rab GGTase dimer (RGGT) interacts with CHM (component A) prior to Rab protein binding; the association is stabilized by geranylgeranyl pyrophosphate (GGpp). The CHM:RGGT:Rab complex is destabilized by GGpp. Interacts with non-phosphorylated form of RAB8A; phosphorylation of RAB8A at 'Thr-72' disrupts this interaction.

It carries out the reaction geranylgeranyl diphosphate + L-cysteinyl-[protein] = S-geranylgeranyl-L-cysteinyl-[protein] + diphosphate. With respect to regulation, the enzymatic reaction requires the aid of a Rab escort protein (also called component A), such as CHM. In terms of biological role, catalyzes the transfer of a geranylgeranyl moiety from geranylgeranyl diphosphate to both cysteines of Rab proteins with the C-terminal sequence -XXCC, -XCXC and -CCXX, such as RAB1A, RAB3A, RAB5A and RAB7A. The chain is Geranylgeranyl transferase type-2 subunit alpha (Rabggta) from Mus musculus (Mouse).